A 288-amino-acid polypeptide reads, in one-letter code: Pantothenate synthetase (288 aa).

ATP is bound at residue 30–37 (MGNLHEGH). Histidine 37 serves as the catalytic Proton donor. Position 61 (glutamine 61) interacts with (R)-pantoate. Residue glutamine 61 participates in beta-alanine binding. ATP is bound at residue 148-151 (GQKD). Glutamine 154 is a (R)-pantoate binding site. ATP-binding positions include valine 177 and 185–188 (LSSR).

This sequence belongs to the pantothenate synthetase family. In terms of assembly, homodimer.

The protein resides in the cytoplasm. It catalyses the reaction (R)-pantoate + beta-alanine + ATP = (R)-pantothenate + AMP + diphosphate + H(+). The protein operates within cofactor biosynthesis; (R)-pantothenate biosynthesis; (R)-pantothenate from (R)-pantoate and beta-alanine: step 1/1. Its function is as follows. Catalyzes the condensation of pantoate with beta-alanine in an ATP-dependent reaction via a pantoyl-adenylate intermediate. In Psychrobacter arcticus (strain DSM 17307 / VKM B-2377 / 273-4), this protein is Pantothenate synthetase.